Reading from the N-terminus, the 421-residue chain is 3-isopropylmalate dehydratase large subunit (421 aa).

Residues Cys-292, Cys-352, and Cys-355 each contribute to the [4Fe-4S] cluster site.

It belongs to the aconitase/IPM isomerase family. LeuC type 2 subfamily. In terms of assembly, heterodimer of LeuC and LeuD. [4Fe-4S] cluster serves as cofactor.

The catalysed reaction is (2R,3S)-3-isopropylmalate = (2S)-2-isopropylmalate. Its pathway is amino-acid biosynthesis; L-leucine biosynthesis; L-leucine from 3-methyl-2-oxobutanoate: step 2/4. Functionally, catalyzes the isomerization between 2-isopropylmalate and 3-isopropylmalate, via the formation of 2-isopropylmaleate. This chain is 3-isopropylmalate dehydratase large subunit, found in Herpetosiphon aurantiacus (strain ATCC 23779 / DSM 785 / 114-95).